A 379-amino-acid polypeptide reads, in one-letter code: Multicilin (379 aa).

The interval 1–129 (MQACEGSAAG…AMDDLIADSS (129 aa)) is necessary and sufficient for its degradation during the cell cycle. 2 disordered regions span residues 26–71 (SRRT…APLP) and 88–107 (LGTE…PSLQ). A compositionally biased stretch (polar residues) spans 92-107 (ASPSGDSSASQNPSLQ). A necessary and sufficient for proper nuclear localization region spans residues 130 to 379 (SLMSPPLTNS…GGYKFRWVPS (250 aa)). Residues 171 to 241 (PPPTEQYWKE…SVLDKLMITQ (71 aa)) are necessary and sufficient for interaction with GMNN and sufficient for homodimerization. Positions 175–223 (EQYWKEVADQNQRALGTALIENNQLHVTLTQKQEEIASLRERNVQLKEL) form a coiled coil. Over residues 291-309 (NRDPKRPRLQPEPDSKDCS) the composition is skewed to basic and acidic residues. Residues 291–312 (NRDPKRPRLQPEPDSKDCSSRN) form a disordered region.

This sequence belongs to the geminin family. Heterodimer (via coiled-coil domain) with GMNN (via coiled-coil domain); targets GMNN to the nucleus. Can form homodimers (in vitro, via coiled-coil domain), but these are much less stable than the heterodimer formed with GMNN.

Its subcellular location is the nucleus. In terms of biological role, transcription regulator specifically required for multiciliate cell differentiation. Acts in a multiprotein complex containing E2F4 and E2F5 that binds and activates genes required for centriole biogenesis. Required for the deuterosome-mediated acentriolar pathway. Plays a role in mitotic cell cycle progression by promoting cell cycle exit. Modulates GMNN activity by reducing its affinity for CDT1. This chain is Multicilin (Mcidas), found in Mus musculus (Mouse).